We begin with the raw amino-acid sequence, 344 residues long: MREQLEALRDDAIKKIEQAQEKKVVQEIRVKYLGKKGPVTEVLRGMGKLSPEERPVIGQLANDVREAIGKAIESKMEALEQAEIHRKLQEETIDVTLPGRPVLKGGAHPLTATITEVEDLFIGLGFSVAEGPQIETDYYNFEALNLPKDHPARDMQDSFYFTDELLLRTQTSPVQARTMEKYKGKGPIKIICPGKVFRRDDDDATHSHQFMQIEGLYVDHGVRMSDLKGVLQAFAKSFFGEERSIRLRPSFFPFTEPSVEVDVSCGICHGDGCRVCKQTGWIEILGAGMVHPRVLEMSGFNPNEYSGFAFGMGVERLSMLKYGIDDIRHFYTNDRRFLAQFKRV.

E256 lines the Mg(2+) pocket.

The protein belongs to the class-II aminoacyl-tRNA synthetase family. Phe-tRNA synthetase alpha subunit type 1 subfamily. As to quaternary structure, tetramer of two alpha and two beta subunits. Mg(2+) serves as cofactor.

It is found in the cytoplasm. The enzyme catalyses tRNA(Phe) + L-phenylalanine + ATP = L-phenylalanyl-tRNA(Phe) + AMP + diphosphate + H(+). This is Phenylalanine--tRNA ligase alpha subunit (pheS) from Halalkalibacterium halodurans (strain ATCC BAA-125 / DSM 18197 / FERM 7344 / JCM 9153 / C-125) (Bacillus halodurans).